Consider the following 209-residue polypeptide: Large ribosomal subunit protein uL3 (209 aa).

At Gln-150 the chain carries N5-methylglutamine.

Belongs to the universal ribosomal protein uL3 family. In terms of assembly, part of the 50S ribosomal subunit. Forms a cluster with proteins L14 and L19. In terms of processing, methylated by PrmB.

Its function is as follows. One of the primary rRNA binding proteins, it binds directly near the 3'-end of the 23S rRNA, where it nucleates assembly of the 50S subunit. The polypeptide is Large ribosomal subunit protein uL3 (Vibrio vulnificus (strain YJ016)).